A 63-amino-acid polypeptide reads, in one-letter code: Large ribosomal subunit protein uL29 (63 aa).

It belongs to the universal ribosomal protein uL29 family.

This is Large ribosomal subunit protein uL29 from Escherichia coli O8 (strain IAI1).